We begin with the raw amino-acid sequence, 206 residues long: uncharacterized protein (206 aa).

Residues 14 to 200 (QRLINQAVEI…TPVVVREGVG (187 aa)) enclose the YrdC-like domain.

It belongs to the SUA5 family.

This is an uncharacterized protein from Escherichia coli O6:H1 (strain CFT073 / ATCC 700928 / UPEC).